The sequence spans 299 residues: Protease HtpX homolog (299 aa).

A run of 2 helical transmembrane segments spans residues 15 to 35 and 39 to 59; these read ILLL…GYLF and GLGG…SMIF. Residue H143 participates in Zn(2+) binding. Residue E144 is part of the active site. H147 contributes to the Zn(2+) binding site. A run of 2 helical transmembrane segments spans residues 158–178 and 198–218; these read IAVA…RMMW and IIML…ATLV. Zn(2+) is bound at residue E227.

It belongs to the peptidase M48B family. Zn(2+) is required as a cofactor.

The protein resides in the cell membrane. This Streptococcus pneumoniae (strain P1031) protein is Protease HtpX homolog.